The chain runs to 705 residues: Polyribonucleotide nucleotidyltransferase (705 aa).

Positions 485 and 491 each coordinate Mg(2+). Positions Pro-552–Ile-611 constitute a KH domain. Positions Gly-621 to Lys-689 constitute an S1 motif domain.

It belongs to the polyribonucleotide nucleotidyltransferase family. It depends on Mg(2+) as a cofactor.

It localises to the cytoplasm. The enzyme catalyses RNA(n+1) + phosphate = RNA(n) + a ribonucleoside 5'-diphosphate. In terms of biological role, involved in mRNA degradation. Catalyzes the phosphorolysis of single-stranded polyribonucleotides processively in the 3'- to 5'-direction. In Clostridium novyi (strain NT), this protein is Polyribonucleotide nucleotidyltransferase.